The sequence spans 109 residues: Small ribosomal subunit protein bS18c (109 aa).

A disordered region spans residues 82–109 (GFERSESTPRTNALKPRNKNKQNNQTQF).

It belongs to the bacterial ribosomal protein bS18 family. In terms of assembly, part of the 30S ribosomal subunit.

Its subcellular location is the plastid. In Cuscuta reflexa (Southern Asian dodder), this protein is Small ribosomal subunit protein bS18c.